A 444-amino-acid polypeptide reads, in one-letter code: MSASTMTPGEIVSELDKYIIGQNRAKRAVAVALRNRWRRQQVEEPLRHEIHPKNILMIGPTGVGKTEIARRLAKLANAPFIKIEATKFTEVGYVGRDVDTIIRDLTEYSIKQTRELEMRRVRTQAEDAAEDRILDALVPPSRGTSGEPERGEDSNARQTFRKRLREGKCDDLEIEIEIAQPVPQMDVMTPPGMEEMAEQLRGMFAGLARDKKKPKKMKVKEAFKLIVEEEAAKRINEDDLRTAAIANVEQNGIVFLDEIDKIAARQESGGADVSRQGVQRDLLPLVEGTTVNTRYGMVRTDHILFIASGAFHLSRPSDLIPELQGRFPIRVELESLTAQDFVRILSDTDASLIKQYSALLGTEDVQLDFKPDGIERLAELAFSVNERTENIGARRLYTVMEKLLEELSFDATASSGKTITIDAAYVDAQLSEAASSQDLARYVL.

ATP contacts are provided by residues I20 and G62–E67. Residues L137–K162 form a disordered region. Positions 257, 322, and 394 each coordinate ATP.

This sequence belongs to the ClpX chaperone family. HslU subfamily. As to quaternary structure, a double ring-shaped homohexamer of HslV is capped on each side by a ring-shaped HslU homohexamer. The assembly of the HslU/HslV complex is dependent on binding of ATP.

It localises to the cytoplasm. ATPase subunit of a proteasome-like degradation complex; this subunit has chaperone activity. The binding of ATP and its subsequent hydrolysis by HslU are essential for unfolding of protein substrates subsequently hydrolyzed by HslV. HslU recognizes the N-terminal part of its protein substrates and unfolds these before they are guided to HslV for hydrolysis. The polypeptide is ATP-dependent protease ATPase subunit HslU (Bordetella petrii (strain ATCC BAA-461 / DSM 12804 / CCUG 43448)).